The chain runs to 237 residues: NAD(P)H-quinone oxidoreductase subunit K, chloroplastic (237 aa).

[4Fe-4S] cluster is bound by residues cysteine 55, cysteine 56, cysteine 120, and cysteine 151.

This sequence belongs to the complex I 20 kDa subunit family. As to quaternary structure, NDH is composed of at least 16 different subunits, 5 of which are encoded in the nucleus. [4Fe-4S] cluster serves as cofactor.

The protein localises to the plastid. It localises to the chloroplast thylakoid membrane. The catalysed reaction is a plastoquinone + NADH + (n+1) H(+)(in) = a plastoquinol + NAD(+) + n H(+)(out). The enzyme catalyses a plastoquinone + NADPH + (n+1) H(+)(in) = a plastoquinol + NADP(+) + n H(+)(out). In terms of biological role, NDH shuttles electrons from NAD(P)H:plastoquinone, via FMN and iron-sulfur (Fe-S) centers, to quinones in the photosynthetic chain and possibly in a chloroplast respiratory chain. The immediate electron acceptor for the enzyme in this species is believed to be plastoquinone. Couples the redox reaction to proton translocation, and thus conserves the redox energy in a proton gradient. The sequence is that of NAD(P)H-quinone oxidoreductase subunit K, chloroplastic from Nephroselmis olivacea (Green alga).